The following is a 181-amino-acid chain: Putative adenylate kinase (181 aa).

Positions 10, 12, 13, 14, and 15 each coordinate ATP. An NMP region spans residues 35-58; it reads NITEVVSKNGLYLEKDIEMDSYVV. An LID region spans residues 106–116; it reads SRNYSSEKVKE. ATP is bound by residues arginine 107 and lysine 147.

Belongs to the adenylate kinase family. AK6 subfamily. As to quaternary structure, interacts with uS11. Not a structural component of 40S pre-ribosomes, but transiently interacts with them by binding to uS11.

The enzyme catalyses AMP + ATP = 2 ADP. It catalyses the reaction ATP + H2O = ADP + phosphate + H(+). Broad-specificity nucleoside monophosphate (NMP) kinase that catalyzes the reversible transfer of the terminal phosphate group between nucleoside triphosphates and monophosphates. Also has ATPase activity. Involved in the late maturation steps of the 30S ribosomal particles, specifically 16S rRNA maturation. While NMP activity is not required for ribosome maturation, ATPase activity is. Associates transiently with small ribosomal subunit protein uS11. ATP hydrolysis breaks the interaction with uS11. May temporarily remove uS11 from the ribosome to enable a conformational change of the ribosomal RNA that is needed for the final maturation step of the small ribosomal subunit. The polypeptide is Putative adenylate kinase (Methanococcus maripaludis (strain C7 / ATCC BAA-1331)).